Consider the following 270-residue polypeptide: Undecaprenyl-diphosphatase 1 (270 aa).

6 helical membrane passes run 41–61, 88–108, 117–137, 192–212, 218–238, and 250–270; these read IEGF…VLLV, FRFI…GVLF, KDGV…LFLI, FSFL…ITDI, LGEL…ATYF, and GNLV…LIFA.

Belongs to the UppP family.

Its subcellular location is the cell membrane. The catalysed reaction is di-trans,octa-cis-undecaprenyl diphosphate + H2O = di-trans,octa-cis-undecaprenyl phosphate + phosphate + H(+). In terms of biological role, catalyzes the dephosphorylation of undecaprenyl diphosphate (UPP). Confers resistance to bacitracin. The protein is Undecaprenyl-diphosphatase 1 of Bacillus licheniformis (strain ATCC 14580 / DSM 13 / JCM 2505 / CCUG 7422 / NBRC 12200 / NCIMB 9375 / NCTC 10341 / NRRL NRS-1264 / Gibson 46).